Reading from the N-terminus, the 75-residue chain is Translational regulator CsrA (75 aa).

It belongs to the CsrA/RsmA family. In terms of assembly, homodimer; the beta-strands of each monomer intercalate to form a hydrophobic core, while the alpha-helices form wings that extend away from the core.

Its subcellular location is the cytoplasm. A translational regulator that binds mRNA to regulate translation initiation and/or mRNA stability. Usually binds in the 5'-UTR at or near the Shine-Dalgarno sequence preventing ribosome-binding, thus repressing translation. Its main target seems to be the major flagellin gene, while its function is anatagonized by FliW. This Exiguobacterium sp. (strain ATCC BAA-1283 / AT1b) protein is Translational regulator CsrA.